The sequence spans 67 residues: Small ribosomal subunit protein bS21 (67 aa).

The protein belongs to the bacterial ribosomal protein bS21 family.

The protein is Small ribosomal subunit protein bS21 of Magnetococcus marinus (strain ATCC BAA-1437 / JCM 17883 / MC-1).